A 239-amino-acid chain; its full sequence is Calcium load-activated calcium channel (239 aa).

The Lumenal portion of the chain corresponds to 1 to 55 (MPRKRKCDLRAVRVGLLLGGGGVYGSRFRFTFPGCRALSPWRVRVQRRRCEMSTM). Residues 56-83 (FADTLLIVFISVCTALLAEGITWVLVYR) traverse the membrane as a helical segment. Residues 83–140 (RTDKYKRLKAEVEKQSKKLEKKKETITESAGRQQKKKIERQEEKLKNNNRDLSMVRMK) adopt a coiled-coil conformation. Topologically, residues 84–137 (TDKYKRLKAEVEKQSKKLEKKKETITESAGRQQKKKIERQEEKLKNNNRDLSMV) are cytoplasmic. A Phosphoserine modification is found at serine 111. Residues 138–157 (RMKSMFAIGFCFTALMGMFN) form a helical membrane-spanning segment. The Lumenal portion of the chain corresponds to 158 to 171 (SIFDGRVVAKLPFT). The stretch at 172-181 (PLSYIQGLSH) is an intramembrane region. Residues 182-191 (RNLLGDDTTD) lie on the Lumenal side of the membrane. A helical transmembrane segment spans residues 192 to 213 (CSFIFLYILCTMSIRQNIQKIL). Topologically, residues 214–239 (GLAPSRAATKQAGGFLGPPPPSGKFS) are cytoplasmic. At serine 239 the chain carries Phosphoserine.

Belongs to the TMCO1 family. Homodimer and homotetramer. Homodimer under resting conditions; forms homotetramers following ER calcium overload. Component of the GET- and EMC-like (GEL) complex, composed of RAB5IF/OPTI and TMCO1. The GEL complex is part of the multi-pass translocon (MPT) complex, composed of three subcomplexes, the GEL complex (composed of RAB5IF/OPTI and TMCO1), the BOS complex (composed of NCLN/Nicalin, NOMO and TMEM147) and the PAT complex (composed of WDR83OS/Asterix and CCDC47). The MPT complex associates with the SEC61 complex. In terms of tissue distribution, widely expressed in adult and fetal tissues, with higher levels in thymus, prostate, testis and small intestine and lower levels in brain, placenta, lung and kidney. Present in most tissues in the eye, including the trabecular meshwork and retina (at protein level).

The protein resides in the endoplasmic reticulum membrane. The protein localises to the golgi apparatus membrane. It localises to the mitochondrion membrane. The enzyme catalyses Ca(2+)(in) = Ca(2+)(out). In terms of biological role, endoplasmic reticulum (ER) calcium-selective channel preventing intracellular Ca2(+) stores from overfilling and maintaining calcium homeostasis in the ER. In response to endoplasmic reticulum (ER) Ca2(+) overloading, assembles into a homotetramer, forming a functional calcium-selective channel facilitating Ca2(+) release. Mediates ER Ca2(+) homeostasis in osteoblasts and plays a key role in bone formation, via the CaMKII-HDAC4-RUNX2 signaling axis. Component of the multi-pass translocon (MPT) complex that mediates insertion of multi-pass membrane proteins into the lipid bilayer of membranes. The MPT complex takes over after the SEC61 complex: following membrane insertion of the first few transmembrane segments of proteins by the SEC61 complex, the MPT complex occludes the lateral gate of the SEC61 complex to promote insertion of subsequent transmembrane regions. Within the MPT complex, the GEL subcomplex may mediate insertion of transmembrane regions into the membrane. This is Calcium load-activated calcium channel from Homo sapiens (Human).